Reading from the N-terminus, the 463-residue chain is D(2)-like dopamine receptor (463 aa).

Topologically, residues 1 to 35 (MDVFTQYAYNDSIFDNGTWSANETTKDETHPYNYY) are extracellular. Residues N10, N16, and N22 are each glycosylated (N-linked (GlcNAc...) asparagine). A helical membrane pass occupies residues 36–58 (AMLLTLLIFVIVFGNVLVCMAVS). Topologically, residues 59 to 68 (REKALQTTTN) are cytoplasmic. A helical transmembrane segment spans residues 69–91 (YLIVSLAVADLLVATLVMPWVVY). Over 92-106 (LEVVGEWRFSKIHCD) the chain is Extracellular. Residues C105 and C183 are joined by a disulfide bond. Residues 107–128 (IFVTLDVMMCTASILNLCAISI) traverse the membrane as a helical segment. At 129–149 (DRYTAVAMPMLYNTRYSSRRR) the chain is on the cytoplasmic side. A helical transmembrane segment spans residues 150–170 (VTVMISVVWVLSFAISCPLLF). Residues 171–189 (GLNNTATRDQSLCFIANPA) lie on the Extracellular side of the membrane. The chain crosses the membrane as a helical span at residues 190–214 (FVVYSSIVSFYVPFIVTLLVYVQIY). Residues 215–392 (VVLRKRRKRV…SQQKEKKATQ (178 aa)) are Cytoplasmic-facing. The interval 295–362 (CGGSHKQPPP…KEAQGNPAPV (68 aa)) is disordered. A compositionally biased stretch (polar residues) spans 315-329 (PATSHQLLMSTKANA). A compositionally biased stretch (basic and acidic residues) spans 341–353 (EGQRTEKNGDPTK). Residues 393–414 (MLAIVLGVFIICWLPFFITHIL) form a helical membrane-spanning segment. Topologically, residues 415–429 (NTHCTRCKVPAEMYN) are extracellular. Residues C418 and C421 are joined by a disulfide bond. Residues 430-451 (AFTWLGYVNSAVNPIIYTTFNV) traverse the membrane as a helical segment. Residues 452–463 (EFRKAFIKILHC) lie on the Cytoplasmic side of the membrane.

This sequence belongs to the G-protein coupled receptor 1 family.

Its subcellular location is the cell membrane. Receptor for dopamine. The polypeptide is D(2)-like dopamine receptor (d215) (Takifugu rubripes (Japanese pufferfish)).